A 704-amino-acid polypeptide reads, in one-letter code: Structure-specific endonuclease subunit SLX1 homolog (704 aa).

In terms of domain architecture, GIY-YIG spans 4–90 (RFHCVYLLTS…TASARLRHTI (87 aa)). Disordered stretches follow at residues 157-180 (ESPR…ADGV), 290-323 (ASFA…RVRT), and 354-378 (GAAL…SRPP). 2 stretches are compositionally biased toward polar residues: residues 161–175 (VGTQ…SLQG) and 311–320 (AGSSTPSPQR). Residues 446 to 526 (CSLCALPLQP…PSQPCPCPLC (81 aa)) form an SLX1-type zinc finger. Disordered regions lie at residues 601–629 (VPGA…SSPI) and 650–671 (ASLA…GHSN). Over residues 650–662 (ASLAALSPTSASP) the composition is skewed to low complexity.

Belongs to the SLX1 family. As to quaternary structure, forms a heterodimer with a member of the SLX4 family. It depends on a divalent metal cation as a cofactor.

It is found in the nucleus. Catalytic subunit of a heterodimeric structure-specific endonuclease that resolves DNA secondary structures generated during DNA repair and recombination. Has endonuclease activity towards branched DNA substrates, introducing single-strand cuts in duplex DNA close to junctions with ss-DNA. The sequence is that of Structure-specific endonuclease subunit SLX1 homolog from Leishmania major.